The sequence spans 349 residues: Protein-glutamate methylesterase/protein-glutamine glutaminase 2 (349 aa).

The region spanning 4-121 is the Response regulatory domain; that stretch reads SVLVVDDSAL…AEGMQAYAEE (118 aa). At Asp55 the chain carries 4-aspartylphosphate. The CheB-type methylesterase domain maps to 151–343; it reads LLSTEKIIAL…AALLQQAARR (193 aa). Active-site residues include Ser163, His189, and Asp285.

Belongs to the CheB family. Interacts with the C-terminal pentapeptide GWEEF of McpB. Post-translationally, phosphorylated by CheA. Phosphorylation of the N-terminal regulatory domain activates the methylesterase activity.

The protein localises to the cytoplasm. It carries out the reaction [protein]-L-glutamate 5-O-methyl ester + H2O = L-glutamyl-[protein] + methanol + H(+). The catalysed reaction is L-glutaminyl-[protein] + H2O = L-glutamyl-[protein] + NH4(+). Functionally, involved in chemotaxis. Part of a chemotaxis signal transduction system that modulates chemotaxis in response to various stimuli. Catalyzes the demethylation of specific methylglutamate residues introduced into the chemoreceptors (methyl-accepting chemotaxis proteins or MCP) by CheR. Also mediates the irreversible deamidation of specific glutamine residues to glutamic acid. Acts on the methyl-accepting chemotaxis protein McpB. May be involved in a specific chemotactic response, which takes place during infection and is required for P.aeruginosa pathogenicity. In Pseudomonas aeruginosa (strain ATCC 15692 / DSM 22644 / CIP 104116 / JCM 14847 / LMG 12228 / 1C / PRS 101 / PAO1), this protein is Protein-glutamate methylesterase/protein-glutamine glutaminase 2.